Here is a 139-residue protein sequence, read N- to C-terminus: Ribulose bisphosphate carboxylase small subunit (139 aa).

Belongs to the RuBisCO small chain family. Heterohexadecamer of 8 large and 8 small subunits.

Its subcellular location is the plastid. The protein resides in the chloroplast. In terms of biological role, ruBisCO catalyzes two reactions: the carboxylation of D-ribulose 1,5-bisphosphate, the primary event in carbon dioxide fixation, as well as the oxidative fragmentation of the pentose substrate in the photorespiration process. Both reactions occur simultaneously and in competition at the same active site. Although the small subunit is not catalytic it is essential for maximal activity. In Pylaiella littoralis (Seaweed), this protein is Ribulose bisphosphate carboxylase small subunit.